A 295-amino-acid polypeptide reads, in one-letter code: Bifunctional protein FolD (295 aa).

Residues 166–168, serine 195, and isoleucine 236 each bind NADP(+); that span reads GRS.

It belongs to the tetrahydrofolate dehydrogenase/cyclohydrolase family. As to quaternary structure, homodimer.

The catalysed reaction is (6R)-5,10-methylene-5,6,7,8-tetrahydrofolate + NADP(+) = (6R)-5,10-methenyltetrahydrofolate + NADPH. It carries out the reaction (6R)-5,10-methenyltetrahydrofolate + H2O = (6R)-10-formyltetrahydrofolate + H(+). The protein operates within one-carbon metabolism; tetrahydrofolate interconversion. Catalyzes the oxidation of 5,10-methylenetetrahydrofolate to 5,10-methenyltetrahydrofolate and then the hydrolysis of 5,10-methenyltetrahydrofolate to 10-formyltetrahydrofolate. The protein is Bifunctional protein FolD of Pelodictyon phaeoclathratiforme (strain DSM 5477 / BU-1).